A 444-amino-acid polypeptide reads, in one-letter code: Tol-Pal system protein TolB (444 aa).

The N-terminal stretch at 1-19 (MRNIIYFILSLLFSVTSYA) is a signal peptide.

The protein belongs to the TolB family. In terms of assembly, the Tol-Pal system is composed of five core proteins: the inner membrane proteins TolA, TolQ and TolR, the periplasmic protein TolB and the outer membrane protein Pal. They form a network linking the inner and outer membranes and the peptidoglycan layer.

The protein localises to the periplasm. Part of the Tol-Pal system, which plays a role in outer membrane invagination during cell division and is important for maintaining outer membrane integrity. This Rickettsia rickettsii (strain Sheila Smith) protein is Tol-Pal system protein TolB.